Consider the following 272-residue polypeptide: uncharacterized protein (272 aa).

NAD(+) is bound by residues 12–34, 39–40, 77–78, and Asn-104; these read FITG…DGAN, DI, and DV. Residue Ser-153 coordinates substrate. Tyr-170 serves as the catalytic Proton acceptor. Residues Lys-174 and 203-205 each bind NAD(+); that span reads VDT.

It belongs to the short-chain dehydrogenases/reductases (SDR) family.

This is an uncharacterized protein from Mycobacterium tuberculosis (strain CDC 1551 / Oshkosh).